The following is a 98-amino-acid chain: Large ribosomal subunit protein uL23 (98 aa).

This sequence belongs to the universal ribosomal protein uL23 family. In terms of assembly, part of the 50S ribosomal subunit. Contacts protein L29, and trigger factor when it is bound to the ribosome.

Functionally, one of the early assembly proteins it binds 23S rRNA. One of the proteins that surrounds the polypeptide exit tunnel on the outside of the ribosome. Forms the main docking site for trigger factor binding to the ribosome. This chain is Large ribosomal subunit protein uL23, found in Dinoroseobacter shibae (strain DSM 16493 / NCIMB 14021 / DFL 12).